Here is a 167-residue protein sequence, read N- to C-terminus: Small ribosomal subunit protein uS5 (167 aa).

The S5 DRBM domain maps to 12–75 (LQEKLIAVNR…EKARRNMVTV (64 aa)).

Belongs to the universal ribosomal protein uS5 family. Part of the 30S ribosomal subunit. Contacts proteins S4 and S8.

With S4 and S12 plays an important role in translational accuracy. Its function is as follows. Located at the back of the 30S subunit body where it stabilizes the conformation of the head with respect to the body. This Shewanella oneidensis (strain ATCC 700550 / JCM 31522 / CIP 106686 / LMG 19005 / NCIMB 14063 / MR-1) protein is Small ribosomal subunit protein uS5.